The sequence spans 514 residues: Chromosomal replication initiator protein DnaA (514 aa).

The domain I, interacts with DnaA modulators stretch occupies residues 1–90 (MSVELWQQCV…KRSRTPRAAI (90 aa)). The tract at residues 91-177 (VPSQTHVAPP…QVEGALKHTS (87 aa)) is domain II. Residues 178–394 (YLNRTFTFEN…GALKRVIAHS (217 aa)) are domain III, AAA+ region. Residues glycine 222, glycine 224, lysine 225, and threonine 226 each contribute to the ATP site. Residues 395-514 (HFMGRPITIE…YKNLLRTLTT (120 aa)) are domain IV, binds dsDNA.

Belongs to the DnaA family. As to quaternary structure, oligomerizes as a right-handed, spiral filament on DNA at oriC.

The protein resides in the cytoplasm. Functionally, plays an essential role in the initiation and regulation of chromosomal replication. ATP-DnaA binds to the origin of replication (oriC) to initiate formation of the DNA replication initiation complex once per cell cycle. Binds the DnaA box (a 9 base pair repeat at the origin) and separates the double-stranded (ds)DNA. Forms a right-handed helical filament on oriC DNA; dsDNA binds to the exterior of the filament while single-stranded (ss)DNA is stabiized in the filament's interior. The ATP-DnaA-oriC complex binds and stabilizes one strand of the AT-rich DNA unwinding element (DUE), permitting loading of DNA polymerase. After initiation quickly degrades to an ADP-DnaA complex that is not apt for DNA replication. Binds acidic phospholipids. This chain is Chromosomal replication initiator protein DnaA, found in Pseudomonas aeruginosa (strain LESB58).